The sequence spans 197 residues: Xanthine phosphoribosyltransferase (197 aa).

Xanthine is bound by residues L20 and N27. Residue 128–132 (ANGQA) coordinates 5-phospho-alpha-D-ribose 1-diphosphate. Position 156 (K156) interacts with xanthine.

It belongs to the purine/pyrimidine phosphoribosyltransferase family. Xpt subfamily. Homodimer.

The protein localises to the cytoplasm. It carries out the reaction XMP + diphosphate = xanthine + 5-phospho-alpha-D-ribose 1-diphosphate. The protein operates within purine metabolism; XMP biosynthesis via salvage pathway; XMP from xanthine: step 1/1. Functionally, converts the preformed base xanthine, a product of nucleic acid breakdown, to xanthosine 5'-monophosphate (XMP), so it can be reused for RNA or DNA synthesis. The polypeptide is Xanthine phosphoribosyltransferase (Bacillus thuringiensis (strain Al Hakam)).